The primary structure comprises 837 residues: Intestinal mucin-like protein (837 aa).

4 repeat units span residues 17–27 (PSTPSTPPPST), 28–38 (PTTPTSSQTTT), 39–50 (PSTPSTTSSKST), and 51–62 (PSTPQSTSSKST). The tract at residues 17-70 (PSTPSTPPPSTPTTPTSSQTTTPSTPSTTSSKSTPSTPQSTSSKSTPSTPPKTT) is 5 X 11 AA approximate tandem repeats. The disordered stretch occupies residues 17–75 (PSTPSTPPPSTPTTPTSSQTTTPSTPSTTSSKSTPSTPQSTSSKSTPSTPPKTTLPGCL). Over residues 29 to 70 (TTPTSSQTTTPSTPSTTSSKSTPSTPQSTSSKSTPSTPPKTT) the composition is skewed to low complexity. Residues 63 to 70 (PSTPPKTT) form a 5; truncated repeat. Asn-91 and Asn-164 each carry an N-linked (GlcNAc...) asparagine glycan. The region spanning 141–324 (CYCTGWGDPH…VNDPSKPHCP (184 aa)) is the VWFD domain. Disulfide bonds link Cys-143–Cys-284, Cys-165–Cys-323, and Cys-189–Cys-197. Residues 149–837 (PHFVTFDGLY…RSSPRLLGRK (689 aa)) are probably important for disulfide-bond mediated mucin polymerization (link domain). Asn-278, Asn-289, Asn-344, Asn-410, Asn-444, Asn-515, Asn-538, Asn-612, Asn-627, Asn-695, Asn-727, and Asn-749 each carry an N-linked (GlcNAc...) asparagine glycan. 2 VWFC domains span residues 472 to 543 (CGCV…TSCK) and 581 to 648 (GVCV…KKCQ). 4 cysteine pairs are disulfide-bonded: Cys-732-Cys-779, Cys-746-Cys-793, Cys-755-Cys-809, and Cys-759-Cys-811. The region spanning 732 to 817 (CSAIPVMKEI…SCLCQGTVCE (86 aa)) is the CTCK domain.

In terms of assembly, multimeric. Coats the epithelia of the intestines.

The protein localises to the secreted. This Rattus norvegicus (Rat) protein is Intestinal mucin-like protein.